A 294-amino-acid chain; its full sequence is S-methyl-5'-thioadenosine phosphorylase (294 aa).

Phosphate contacts are provided by residues S16, 58 to 59, and 91 to 92; these read RH and SA. M189 serves as a coordination point for substrate. T190 provides a ligand contact to phosphate. 213–215 serves as a coordination point for substrate; the sequence is DFD.

The protein belongs to the PNP/MTAP phosphorylase family. MTAP subfamily. As to quaternary structure, homohexamer. Dimer of a homotrimer.

It carries out the reaction S-methyl-5'-thioadenosine + phosphate = 5-(methylsulfanyl)-alpha-D-ribose 1-phosphate + adenine. The enzyme catalyses 5'-deoxyadenosine + phosphate = 5-deoxy-alpha-D-ribose 1-phosphate + adenine. It functions in the pathway amino-acid biosynthesis; L-methionine biosynthesis via salvage pathway; S-methyl-5-thio-alpha-D-ribose 1-phosphate from S-methyl-5'-thioadenosine (phosphorylase route): step 1/1. In terms of biological role, catalyzes the reversible phosphorylation of S-methyl-5'-thioadenosine (MTA) to adenine and 5-methylthioribose-1-phosphate. Involved in the breakdown of MTA, a major by-product of polyamine biosynthesis. Responsible for the first step in the methionine salvage pathway after MTA has been generated from S-adenosylmethionine. Has broad substrate specificity with 6-aminopurine nucleosides as preferred substrates. Also catalyzes the phosphorylation of 5'-deoxyadenosine (5'dAdo) to 5-deoxyribose 1-phosphate. Part of a bifunctional DHAP-shunt salvage pathway for SAM by-products. The sequence is that of S-methyl-5'-thioadenosine phosphorylase from Rhodospirillum rubrum (strain ATCC 11170 / ATH 1.1.1 / DSM 467 / LMG 4362 / NCIMB 8255 / S1).